A 103-amino-acid polypeptide reads, in one-letter code: UPF0145 protein RSKD131_1772 (103 aa).

It belongs to the UPF0145 family.

This is UPF0145 protein RSKD131_1772 from Cereibacter sphaeroides (strain KD131 / KCTC 12085) (Rhodobacter sphaeroides).